We begin with the raw amino-acid sequence, 357 residues long: NAD kinase 1 (357 aa).

Asp-68 (proton acceptor) is an active-site residue. NAD(+) is bound by residues 68–69 (DG), Arg-73, 175–176 (ND), Arg-186, Asp-205, Ala-240, and Gln-275.

This sequence belongs to the NAD kinase family. A divalent metal cation serves as cofactor.

The protein resides in the cytoplasm. It carries out the reaction NAD(+) + ATP = ADP + NADP(+) + H(+). Its function is as follows. Involved in the regulation of the intracellular balance of NAD and NADP, and is a key enzyme in the biosynthesis of NADP. Catalyzes specifically the phosphorylation on 2'-hydroxyl of the adenosine moiety of NAD to yield NADP. The protein is NAD kinase 1 of Streptomyces avermitilis (strain ATCC 31267 / DSM 46492 / JCM 5070 / NBRC 14893 / NCIMB 12804 / NRRL 8165 / MA-4680).